A 484-amino-acid polypeptide reads, in one-letter code: Protein LAZ1 homolog 1 (484 aa).

The signal sequence occupies residues 1–19 (MEWRGILCSLLFIVSVGES). 6 helical membrane-spanning segments follow: residues 42 to 62 (PILS…YLIF), 76 to 96 (FLIG…LSLV), 190 to 210 (MILK…GVYG), 219 to 239 (GYPY…YCLV), 264 to 284 (IVFL…MGLV), and 299 to 319 (YIIC…FPAA). The interval 344–364 (PDPEEVKDSERTTRTRYGRHD) is disordered. Basic and acidic residues predominate over residues 347 to 364 (EEVKDSERTTRTRYGRHD). Residues 406 to 428 (IAKINRTFHQISENVKRFEQQKK) are a coiled coil. The tract at residues 459-484 (VSDSGLGSTNRHHQSRVSGLWTRMRR) is disordered.

This sequence belongs to the TMEM184 family.

It localises to the membrane. The protein is Protein LAZ1 homolog 1 of Arabidopsis thaliana (Mouse-ear cress).